The sequence spans 117 residues: Hainantoxin-XV-2 (117 aa).

Positions 1 to 20 are cleaved as a signal peptide; the sequence is MKLCAVIIASLLVCVAVASS. Residues 20–55 form a disordered region; the sequence is SSDNQKEFAQEKEMTREETQSLGEHEKDDEVTGSEE. A propeptide spanning residues 21–56 is cleaved from the precursor; the sequence is SDNQKEFAQEKEMTREETQSLGEHEKDDEVTGSEER. A compositionally biased stretch (basic and acidic residues) spans 23-55; that stretch reads NQKEFAQEKEMTREETQSLGEHEKDDEVTGSEE. Intrachain disulfides connect Cys-58–Cys-72, Cys-65–Cys-78, Cys-69–Cys-115, and Cys-71–Cys-91.

The protein belongs to the neurotoxin 03 (Tx2) family. 02 subfamily. HNTX-XV sub-subfamily. Expressed by the venom gland.

It is found in the secreted. Functionally, putative ion channel inhibitor. This chain is Hainantoxin-XV-2, found in Cyriopagopus hainanus (Chinese bird spider).